We begin with the raw amino-acid sequence, 481 residues long: 2-methylisoborneol synthase (481 aa).

Disordered stretches follow at residues 1-125 (MPDS…PVGP) and 139-160 (QAAV…GPVV). Residues 11 to 23 (TSLPEQPPAPPAT) are compositionally biased toward pro residues. Residues 24–33 (APDAPAATVT) are compositionally biased toward low complexity. 2 stretches are compositionally biased toward pro residues: residues 52-64 (VTRP…PSMP) and 71-104 (SSPP…PPAT). Over residues 105 to 114 (APETSAATGS) the composition is skewed to low complexity. The Mg(2+) site is built by aspartate 238, aspartate 239, glutamate 243, asparagine 386, serine 390, and glutamate 394.

Belongs to the terpene synthase family. 2-methylisoborneol synthase subfamily. The cofactor is Mg(2+).

The enzyme catalyses (E)-2-methylgeranyl diphosphate + H2O = 2-methylisoborneol + diphosphate. Functionally, catalyzes the cyclization of 2-methylgeranyl diphosphate (2-MeGPP) to 2-methylisoborneol (2-MIB), which likely involves the intermediacy of 2-methyllinalyl diphosphate. The chain is 2-methylisoborneol synthase (tpc) from Streptomyces lasalocidi (Streptomyces lasaliensis).